The chain runs to 206 residues: Pyridoxal 5'-phosphate synthase subunit PdxT (206 aa).

Residue 59-61 (GES) participates in L-glutamine binding. Catalysis depends on Cys91, which acts as the Nucleophile. L-glutamine is bound by residues Arg123 and 151–152 (IR). Active-site charge relay system residues include His187 and Glu189.

The protein belongs to the glutaminase PdxT/SNO family. In terms of assembly, in the presence of PdxS, forms a dodecamer of heterodimers. Only shows activity in the heterodimer.

The enzyme catalyses aldehydo-D-ribose 5-phosphate + D-glyceraldehyde 3-phosphate + L-glutamine = pyridoxal 5'-phosphate + L-glutamate + phosphate + 3 H2O + H(+). It carries out the reaction L-glutamine + H2O = L-glutamate + NH4(+). It participates in cofactor biosynthesis; pyridoxal 5'-phosphate biosynthesis. Catalyzes the hydrolysis of glutamine to glutamate and ammonia as part of the biosynthesis of pyridoxal 5'-phosphate. The resulting ammonia molecule is channeled to the active site of PdxS. The chain is Pyridoxal 5'-phosphate synthase subunit PdxT from Mycobacterium sp. (strain JLS).